The sequence spans 594 residues: DNA polymerase epsilon subunit B (594 aa).

It belongs to the DNA polymerase epsilon subunit B family. As to quaternary structure, heterotetramer. Consists of four subunits: pol2, dpb2, dpb3 and dpb4. Interacts with dpb3.

The protein resides in the nucleus. Functionally, as accessory component of the DNA polymerase epsilon (DNA polymerase II) participates in chromosomal DNA replication. In Schizosaccharomyces pombe (strain 972 / ATCC 24843) (Fission yeast), this protein is DNA polymerase epsilon subunit B (dpb2).